The following is a 591-amino-acid chain: MAERTHACGKVTVEAVGQTVQLKGWVQKRRDLGGLIFIDLRDRTGIVQVVFNPETSKEALEVAETIRSEYVLHVEGTVVERGEGAINDNMATGRIEVQATKVNVLNAAKTTPIIIADDTDASEDVRLKYRYLDLRRPVMFNTFKMRHDVTKTIRNFLDTEEFLEVETPILTKSTPEGARDYLVPSRVHDGEFYALPQSPQLFKQLLMVGGFERYYQVARCFRDEDLRADRQPEFTQIDIEASFLTQEEILDMMERMMTKVMKDAKGVEISAPFPRMTYADAMARYGSDKPDTRFEMELTDLSEFAAGCGFKVFTSAVESGGQVKAINAKGAASKYSRKDIDALTEFVKVYGAKGLAWLKVEEDGLKGPIAKFFGEEDANVLMNTLEATAGDLLLFVADKKSVVADSLGALRLRLGKELELIDESKFNFLWVTDWPLLEYDEDADRYFAAHHPFTMPFREDVELLETAPEKARAQAYDLVLNGYELGGGSLRIYERDVQEKMFKALGFSQEEAQEQFGFLLEAFEYGTPPHGGIALGLDRLVMLLAGRTNLRDTIAFPKTASASCLLTEAPSPVAEAQLEELNLKLSLKEEK.

Position 176 (glutamate 176) interacts with L-aspartate. The segment at 200–203 is aspartate; that stretch reads QLFK. Arginine 222 contacts L-aspartate. ATP is bound by residues 222–224 and glutamine 231; that span reads RDE. Residue histidine 450 coordinates L-aspartate. Glutamate 484 contacts ATP. Arginine 491 is an L-aspartate binding site. 536-539 serves as a coordination point for ATP; the sequence is GLDR.

This sequence belongs to the class-II aminoacyl-tRNA synthetase family. Type 1 subfamily. Homodimer.

The protein localises to the cytoplasm. It catalyses the reaction tRNA(Asx) + L-aspartate + ATP = L-aspartyl-tRNA(Asx) + AMP + diphosphate. Functionally, aspartyl-tRNA synthetase with relaxed tRNA specificity since it is able to aspartylate not only its cognate tRNA(Asp) but also tRNA(Asn). Reaction proceeds in two steps: L-aspartate is first activated by ATP to form Asp-AMP and then transferred to the acceptor end of tRNA(Asp/Asn). This chain is Aspartate--tRNA(Asp/Asn) ligase, found in Bacillus cereus (strain AH187).